A 199-amino-acid chain; its full sequence is Proteasome subunit beta type-2-B (199 aa).

Methionine 1 is modified (N-acetylmethionine).

Belongs to the peptidase T1B family. As to quaternary structure, component of the 20S core complex of the 26S proteasome. The 26S proteasome is composed of a core protease (CP), known as the 20S proteasome, capped at one or both ends by the 19S regulatory particle (RP/PA700). The 20S proteasome core is composed of 28 subunits that are arranged in four stacked rings, resulting in a barrel-shaped structure. The two end rings are each formed by seven alpha subunits, and the two central rings are each formed by seven beta subunits. The catalytic chamber with the active sites is on the inside of the barrel. Ubiquitous low levels, higher expression in siliques and flowers.

Its subcellular location is the cytoplasm. The protein localises to the nucleus. In terms of biological role, non-catalytic component of the proteasome, a multicatalytic proteinase complex which is characterized by its ability to cleave peptides with Arg, Phe, Tyr, Leu, and Glu adjacent to the leaving group at neutral or slightly basic pH. The proteasome has an ATP-dependent proteolytic activity. The protein is Proteasome subunit beta type-2-B (PBD2) of Arabidopsis thaliana (Mouse-ear cress).